The sequence spans 231 residues: MITELAAMLKERFGIVFNDPDLLAEAFTQASYVNEHQDQQLKYYERVEFLGDAVLELVVSEYLYKRYKDMPQGKLTRLRAAMVCEESFASFARECDFPQYIRLGKGEQKAHAWERDSLLCDIFESFVGALYLDQGREPVLKFVHQVIFPKLDEGRFDGVFDYKTTLQEYLQRDGDVAIDYQLIEQDGPANERSYEIAVLADGQKIGEGWGHSKKEAEQSAARQAYSQLQQK.

In terms of domain architecture, RNase III spans 6-135; that stretch reads AAMLKERFGI…FVGALYLDQG (130 aa). Glutamate 48 serves as a coordination point for Mg(2+). The active site involves aspartate 52. Positions 121 and 124 each coordinate Mg(2+). Residue glutamate 124 is part of the active site. Positions 161–230 constitute a DRBM domain; it reads DYKTTLQEYL…ARQAYSQLQQ (70 aa). The tract at residues 209–231 is disordered; sequence WGHSKKEAEQSAARQAYSQLQQK. Residues 220–231 show a composition bias toward polar residues; the sequence is AARQAYSQLQQK.

It belongs to the ribonuclease III family. In terms of assembly, homodimer. Mg(2+) serves as cofactor.

The protein resides in the cytoplasm. The catalysed reaction is Endonucleolytic cleavage to 5'-phosphomonoester.. Digests double-stranded RNA. Involved in the processing of primary rRNA transcript to yield the immediate precursors to the large and small rRNAs (23S and 16S). Processes some mRNAs, and tRNAs when they are encoded in the rRNA operon. Processes pre-crRNA and tracrRNA of type II CRISPR loci if present in the organism. The protein is Ribonuclease 3 of Lactiplantibacillus plantarum (strain ATCC BAA-793 / NCIMB 8826 / WCFS1) (Lactobacillus plantarum).